Consider the following 421-residue polypeptide: ATP-dependent RNA helicase RhlB (421 aa).

The Q motif signature appears at 9–37 (THFADLPINEQVVKALSAANFSHCTPIQA). The region spanning 40-216 (LPPLLEGNDI…YEHMDNPTHV (177 aa)) is the Helicase ATP-binding domain. Residue 53–60 (AQTGTGKT) participates in ATP binding. Positions 162 to 165 (DEAD) match the DEAD box motif. The Helicase C-terminal domain maps to 240–387 (KMALLLSLME…VTEYQADALL (148 aa)). The interval 389 to 421 (DVTPPKPRHKKRMQNGRNPQKRQSSGSRNRRKP) is disordered. Over residues 403 to 415 (NGRNPQKRQSSGS) the composition is skewed to polar residues.

It belongs to the DEAD box helicase family. RhlB subfamily. In terms of assembly, component of the RNA degradosome, which is a multiprotein complex involved in RNA processing and mRNA degradation.

Its subcellular location is the cytoplasm. It catalyses the reaction ATP + H2O = ADP + phosphate + H(+). Its function is as follows. DEAD-box RNA helicase involved in RNA degradation. Has RNA-dependent ATPase activity and unwinds double-stranded RNA. In Pseudoalteromonas atlantica (strain T6c / ATCC BAA-1087), this protein is ATP-dependent RNA helicase RhlB.